The primary structure comprises 689 residues: DNA ligase (689 aa).

NAD(+)-binding positions include Asp40–Asp44, Ser89–Leu90, and Glu122. The active-site N6-AMP-lysine intermediate is Lys124. Arg145, Glu182, Lys300, and Lys325 together coordinate NAD(+). The Zn(2+) site is built by Cys419, Cys422, Cys437, and Cys442. Residues Gln600–Ala689 form the BRCT domain.

This sequence belongs to the NAD-dependent DNA ligase family. LigA subfamily. Mg(2+) is required as a cofactor. Mn(2+) serves as cofactor.

It carries out the reaction NAD(+) + (deoxyribonucleotide)n-3'-hydroxyl + 5'-phospho-(deoxyribonucleotide)m = (deoxyribonucleotide)n+m + AMP + beta-nicotinamide D-nucleotide.. DNA ligase that catalyzes the formation of phosphodiester linkages between 5'-phosphoryl and 3'-hydroxyl groups in double-stranded DNA using NAD as a coenzyme and as the energy source for the reaction. It is essential for DNA replication and repair of damaged DNA. The polypeptide is DNA ligase (Gemmatimonas aurantiaca (strain DSM 14586 / JCM 11422 / NBRC 100505 / T-27)).